The sequence spans 268 residues: Acidic leucine-rich nuclear phosphoprotein 32 family member E (268 aa).

Met-1 bears the N-acetylmethionine mark. LRR repeat units lie at residues Glu-18 to Asn-38, Glu-43 to Asn-64, Lys-65 to Cys-87, and Asn-89 to Gln-110. Lys-68 is covalently cross-linked (Glycyl lysine isopeptide (Lys-Gly) (interchain with G-Cter in SUMO2)). An LRRCT domain is found at Cys-123–Glu-161. 2 stretches are compositionally biased toward acidic residues: residues Asp-149–Val-216 and Ile-226–Glu-247. The disordered stretch occupies residues Asp-149–Asp-268. A ZID domain region spans residues Glu-215–Asp-268. Positions Gly-248–Ala-259 are enriched in basic and acidic residues.

It belongs to the ANP32 family. Interacts with the importin alpha KPNA1 and KPNA2. Component of a SWR1-like complex, composed of EP400, KAT5/TIP60, TRRAP, BRD8, RUVBL1, RUVBL2, ING3 and ANP32E; the complex does not contain SRCAP. Interacts with H2A.Z/H2AZ1. Post-translationally, phosphorylated. The phosphorylation is nuclear localization signal (NLS)-dependent. As to expression, expressed in peripheral blood leukocytes, colon, small intestine, prostate, thymus, spleen, skeletal muscle, liver and kidney.

The protein localises to the cytoplasm. It localises to the nucleus. In terms of biological role, histone chaperone that specifically mediates the genome-wide removal of histone H2A.Z/H2AZ1 from the nucleosome: removes H2A.Z/H2AZ1 from its normal sites of deposition, especially from enhancer and insulator regions. Not involved in deposition of H2A.Z/H2AZ1 in the nucleosome. May stabilize the evicted H2A.Z/H2AZ1-H2B dimer, thus shifting the equilibrium towards dissociation and the off-chromatin state. Inhibits activity of protein phosphatase 2A (PP2A). Does not inhibit protein phosphatase 1. May play a role in cerebellar development and synaptogenesis. This chain is Acidic leucine-rich nuclear phosphoprotein 32 family member E (ANP32E), found in Homo sapiens (Human).